The sequence spans 221 residues: Orotidine 5'-phosphate decarboxylase (221 aa).

Substrate is bound by residues aspartate 12, lysine 34, 60–69, serine 117, 170–180, glycine 193, and arginine 194; these read DFKVADIPNT and PGVGAQGGKAS. The active-site Proton donor is the lysine 62.

Belongs to the OMP decarboxylase family. Type 1 subfamily. Homodimer.

It carries out the reaction orotidine 5'-phosphate + H(+) = UMP + CO2. It functions in the pathway pyrimidine metabolism; UMP biosynthesis via de novo pathway; UMP from orotate: step 2/2. In terms of biological role, catalyzes the decarboxylation of orotidine 5'-monophosphate (OMP) to uridine 5'-monophosphate (UMP). The polypeptide is Orotidine 5'-phosphate decarboxylase (Methanosarcina barkeri (strain Fusaro / DSM 804)).